We begin with the raw amino-acid sequence, 85 residues long: Large ribosomal subunit protein bL27 (85 aa).

Positions 1 to 20 (MAHKKAGGSTRNGRDSESKR) are disordered.

The protein belongs to the bacterial ribosomal protein bL27 family.

This chain is Large ribosomal subunit protein bL27, found in Azotobacter vinelandii (strain DJ / ATCC BAA-1303).